The primary structure comprises 350 residues: MKFSEIISQFGETGTNHSLTSNPDHDPEIIGVAAIDEATNGTLSYVEGPKFGSFVSKTNATALILPQDEKLQELAQENGIVWISTSDPRLLFAKAIALFYQPYRPVPEIHPTAVIHSSAKVGSDVYVGPHVVIQQGVEIGDGAIIHPNVVIYPDTKIGDRTTLHANCTIHERTRIGADCVIHSGAVIGAEGFGFVPSRTGWLKMEQSGYTVLEDGVVVGCNTAIDRPAVGETRVGRNTVIDNLVQIGHGCQIGSGCAIAGQAGMAGGVKLGNRVILAGQTGIANQVKIGDGAIASAQTGIHSDVAPGEIVSGTPAIPYKLYLKVCAVYSRLPDMYQSLKQLQRKFKNSND.

His-248 (proton acceptor) is an active-site residue.

This sequence belongs to the transferase hexapeptide repeat family. LpxD subfamily. Homotrimer.

It carries out the reaction a UDP-3-O-[(3R)-3-hydroxyacyl]-alpha-D-glucosamine + a (3R)-hydroxyacyl-[ACP] = a UDP-2-N,3-O-bis[(3R)-3-hydroxyacyl]-alpha-D-glucosamine + holo-[ACP] + H(+). It participates in bacterial outer membrane biogenesis; LPS lipid A biosynthesis. Functionally, catalyzes the N-acylation of UDP-3-O-acylglucosamine using 3-hydroxyacyl-ACP as the acyl donor. Is involved in the biosynthesis of lipid A, a phosphorylated glycolipid that anchors the lipopolysaccharide to the outer membrane of the cell. The chain is UDP-3-O-acylglucosamine N-acyltransferase from Nostoc punctiforme (strain ATCC 29133 / PCC 73102).